A 639-amino-acid chain; its full sequence is Protein P1 (639 aa).

Positions 1–20 (MNRFTAYAALFFIFSLCSTA) are cleaved as a signal peptide. Helical transmembrane passes span 121-141 (AASV…WTLA), 144-164 (ITLF…LGCI), and 172-192 (ALSL…KIIW). The 193-residue stretch at 207 to 399 (VEGYKGFSVP…GITSPNYVFE (193 aa)) folds into the Peptidase S39 domain. Catalysis depends on for protease activity residues histidine 255, aspartate 286, and serine 354. Disordered stretches follow at residues 456-510 (TNAP…AAIS) and 542-639 (VSQK…NSKA). The segment covering 463–487 (TAQTNSAEKTAPSTSAEKTAPTNKP) has biased composition (polar residues). Positions 551–561 (KQNKRGRRGGK) are enriched in basic residues. A compositionally biased stretch (polar residues) spans 562-576 (NKQNNLPPTSTQSIS).

This sequence belongs to the peptidase S39B family. Specific enzymatic cleavages in vivo yield mature proteins. The protease probably cleaves itself and releases the VPg protein. The VPg protein is probably further cleaved in its C-terminus.

The protein localises to the membrane. Functionally, precursor from which the VPg molecule is probably released at the onset of the RNA synthesis. Essential for virus replication. In Solanum tuberosum (Potato), this protein is Protein P1.